The chain runs to 88 residues: MLKYVVTDIGKMCLYIWPYRVWSWRRLFIFRVLNVVSIAILFETPHRLALVLNVCLYTHISMCLYNCYCLYNVVTFSLNLILISMTFI.

2 helical membrane passes run 27-46 (LFIFRVLNVVSIAILFETPH) and 61-83 (SMCLYNCYCLYNVVTFSLNLILI).

Its subcellular location is the membrane. This is an uncharacterized protein from Saccharomyces cerevisiae (strain ATCC 204508 / S288c) (Baker's yeast).